Reading from the N-terminus, the 220-residue chain is Probable cutinase 5 (220 aa).

The N-terminal stretch at 1–18 (MVALHTLLLTAFAAVSLA) is a signal peptide. Intrachain disulfides connect Cys42–Cys121 and Cys68–Cys82. The active-site Nucleophile is Ser132. Cys183 and Cys190 are disulfide-bonded. Asp187 is an active-site residue. The active-site Proton donor/acceptor is His200.

Belongs to the cutinase family.

It is found in the secreted. The enzyme catalyses cutin + H2O = cutin monomers.. In terms of biological role, catalyzes the hydrolysis of complex carboxylic polyesters found in the cell wall of plants. Degrades cutin, a macromolecule that forms the structure of the plant cuticle. This is Probable cutinase 5 from Aspergillus terreus (strain NIH 2624 / FGSC A1156).